Consider the following 173-residue polypeptide: MQFPMGPACIFLRKGIAEKQRERPLGPDEIEELREAFLEFDKDRDGFISCKDLGNLMRTMGYMPTEMELIELGQQIRMNLGGRVDFDDFVELMTPKLLAETAGMIGVQEMRDAFKEFDANGDGEITLGELQQAMQRLLGDKLTSQEISEVVQEADINGDGTVDFEEFVKMMSR.

4 consecutive EF-hand domains span residues 28–63 (DEIEELREAFLEFDKDRDGFISCKDLGNLMRTMGYM), 82–99 (GRVDFDDFVELMTPKLLA), 105–140 (IGVQEMRDAFKEFDANGDGEITLGELQQAMQRLLGD), and 142–173 (LTSQEISEVVQEADINGDGTVDFEEFVKMMSR). Residues aspartate 41, aspartate 43, aspartate 45, and aspartate 52 each coordinate Ca(2+). Positions 118, 120, 122, 124, 129, 155, 157, 159, 161, and 166 each coordinate Ca(2+).

Interacts with CACNA1C (via C-terminal CDB motif) in a calcium-dependent manner. Interacts with STXBP1. Interacts with MYO6. As to expression, expressed in the retina (at protein level).

Its subcellular location is the cytoplasm. Its function is as follows. Inhibits calcium-dependent inactivation of L-type calcium channel and shifts voltage dependence of activation to more depolarized membrane potentials. Involved in the transmission of light signals. May positively regulate neurotransmitter vesicle endocytosis and exocytosis in a salt-dependent manner. May play a role in the extension and network organization of neurites. This Bos taurus (Bovine) protein is Calcium-binding protein 5 (CABP5).